The primary structure comprises 475 residues: ATP synthase subunit beta (475 aa).

160–167 (GGAGVGKT) contributes to the ATP binding site.

This sequence belongs to the ATPase alpha/beta chains family. As to quaternary structure, F-type ATPases have 2 components, CF(1) - the catalytic core - and CF(0) - the membrane proton channel. CF(1) has five subunits: alpha(3), beta(3), gamma(1), delta(1), epsilon(1). CF(0) has three main subunits: a(1), b(2) and c(9-12). The alpha and beta chains form an alternating ring which encloses part of the gamma chain. CF(1) is attached to CF(0) by a central stalk formed by the gamma and epsilon chains, while a peripheral stalk is formed by the delta and b chains.

It localises to the cell membrane. It carries out the reaction ATP + H2O + 4 H(+)(in) = ADP + phosphate + 5 H(+)(out). Its function is as follows. Produces ATP from ADP in the presence of a proton gradient across the membrane. The catalytic sites are hosted primarily by the beta subunits. The protein is ATP synthase subunit beta of Mycolicibacterium vanbaalenii (strain DSM 7251 / JCM 13017 / BCRC 16820 / KCTC 9966 / NRRL B-24157 / PYR-1) (Mycobacterium vanbaalenii).